The sequence spans 210 residues: Cytochrome c oxidase subunit 2 (210 aa).

The Mitochondrial intermembrane segment spans residues M1–L20. The helical transmembrane segment at S21–S42 threads the bilayer. Residues K43–D60 are Mitochondrial matrix-facing. Residues V61 to H86 form a helical membrane-spanning segment. The Mitochondrial intermembrane segment spans residues L87–I210. H157, C192, E194, C196, H200, and M203 together coordinate Cu cation. E194 lines the Mg(2+) pocket.

The protein belongs to the cytochrome c oxidase subunit 2 family. In terms of assembly, component of the cytochrome c oxidase (complex IV, CIV), a multisubunit enzyme composed of a catalytic core of 3 subunits and several supernumerary subunits. The complex exists as a monomer or a dimer and forms supercomplexes (SCs) in the inner mitochondrial membrane with ubiquinol-cytochrome c oxidoreductase (cytochrome b-c1 complex, complex III, CIII). The cofactor is Cu cation.

Its subcellular location is the mitochondrion inner membrane. The catalysed reaction is 4 Fe(II)-[cytochrome c] + O2 + 8 H(+)(in) = 4 Fe(III)-[cytochrome c] + 2 H2O + 4 H(+)(out). Its function is as follows. Component of the cytochrome c oxidase, the last enzyme in the mitochondrial electron transport chain which drives oxidative phosphorylation. The respiratory chain contains 3 multisubunit complexes succinate dehydrogenase (complex II, CII), ubiquinol-cytochrome c oxidoreductase (cytochrome b-c1 complex, complex III, CIII) and cytochrome c oxidase (complex IV, CIV), that cooperate to transfer electrons derived from NADH and succinate to molecular oxygen, creating an electrochemical gradient over the inner membrane that drives transmembrane transport and the ATP synthase. Cytochrome c oxidase is the component of the respiratory chain that catalyzes the reduction of oxygen to water. Electrons originating from reduced cytochrome c in the intermembrane space (IMS) are transferred via the dinuclear copper A center (CU(A)) of subunit 2 and heme A of subunit 1 to the active site in subunit 1, a binuclear center (BNC) formed by heme A3 and copper B (CU(B)). The BNC reduces molecular oxygen to 2 water molecules using 4 electrons from cytochrome c in the IMS and 4 protons from the mitochondrial matrix. This Leishmania tarentolae (Sauroleishmania tarentolae) protein is Cytochrome c oxidase subunit 2.